A 308-amino-acid chain; its full sequence is Putative transposon Ty5-1 protein YCL074W (308 aa).

In Saccharomyces cerevisiae (strain ATCC 204508 / S288c) (Baker's yeast), this protein is Putative transposon Ty5-1 protein YCL074W (TY5A).